The primary structure comprises 279 residues: Tryptophan synthase alpha chain (279 aa).

Catalysis depends on proton acceptor residues E50 and D61.

This sequence belongs to the TrpA family. Tetramer of two alpha and two beta chains.

The enzyme catalyses (1S,2R)-1-C-(indol-3-yl)glycerol 3-phosphate + L-serine = D-glyceraldehyde 3-phosphate + L-tryptophan + H2O. Its pathway is amino-acid biosynthesis; L-tryptophan biosynthesis; L-tryptophan from chorismate: step 5/5. In terms of biological role, the alpha subunit is responsible for the aldol cleavage of indoleglycerol phosphate to indole and glyceraldehyde 3-phosphate. The protein is Tryptophan synthase alpha chain of Mesorhizobium japonicum (strain LMG 29417 / CECT 9101 / MAFF 303099) (Mesorhizobium loti (strain MAFF 303099)).